The chain runs to 106 residues: Phosphoribosyl-ATP pyrophosphatase (106 aa).

It belongs to the PRA-PH family.

The protein resides in the cytoplasm. The enzyme catalyses 1-(5-phospho-beta-D-ribosyl)-ATP + H2O = 1-(5-phospho-beta-D-ribosyl)-5'-AMP + diphosphate + H(+). It functions in the pathway amino-acid biosynthesis; L-histidine biosynthesis; L-histidine from 5-phospho-alpha-D-ribose 1-diphosphate: step 2/9. The polypeptide is Phosphoribosyl-ATP pyrophosphatase (Limosilactobacillus fermentum (strain NBRC 3956 / LMG 18251) (Lactobacillus fermentum)).